Reading from the N-terminus, the 333-residue chain is Adenosine deaminase (333 aa).

Zn(2+) is bound by residues His12 and His14. Substrate is bound by residues His14, Asp16, and Gly170. His197 provides a ligand contact to Zn(2+). The active-site Proton donor is the Glu200. Asp278 lines the Zn(2+) pocket. A substrate-binding site is contributed by Asp279.

Belongs to the metallo-dependent hydrolases superfamily. Adenosine and AMP deaminases family. Adenosine deaminase subfamily. The cofactor is Zn(2+).

It catalyses the reaction adenosine + H2O + H(+) = inosine + NH4(+). The catalysed reaction is 2'-deoxyadenosine + H2O + H(+) = 2'-deoxyinosine + NH4(+). Functionally, catalyzes the hydrolytic deamination of adenosine and 2-deoxyadenosine. This Escherichia coli O81 (strain ED1a) protein is Adenosine deaminase.